The following is a 490-amino-acid chain: Bifunctional protein HldE (490 aa).

The ribokinase stretch occupies residues 1–330 (MFDFDDLSQA…RKILPHAYRA (330 aa)). ATP is bound at residue 205 to 208 (NRKE). D275 is a catalytic residue. Positions 358–490 (FTNGCFDILH…LVDRARSDQR (133 aa)) are cytidylyltransferase.

It in the N-terminal section; belongs to the carbohydrate kinase PfkB family. This sequence in the C-terminal section; belongs to the cytidylyltransferase family. Homodimer.

The catalysed reaction is D-glycero-beta-D-manno-heptose 7-phosphate + ATP = D-glycero-beta-D-manno-heptose 1,7-bisphosphate + ADP + H(+). It carries out the reaction D-glycero-beta-D-manno-heptose 1-phosphate + ATP + H(+) = ADP-D-glycero-beta-D-manno-heptose + diphosphate. Its pathway is nucleotide-sugar biosynthesis; ADP-L-glycero-beta-D-manno-heptose biosynthesis; ADP-L-glycero-beta-D-manno-heptose from D-glycero-beta-D-manno-heptose 7-phosphate: step 1/4. It participates in nucleotide-sugar biosynthesis; ADP-L-glycero-beta-D-manno-heptose biosynthesis; ADP-L-glycero-beta-D-manno-heptose from D-glycero-beta-D-manno-heptose 7-phosphate: step 3/4. In terms of biological role, catalyzes the phosphorylation of D-glycero-D-manno-heptose 7-phosphate at the C-1 position to selectively form D-glycero-beta-D-manno-heptose-1,7-bisphosphate. Its function is as follows. Catalyzes the ADP transfer from ATP to D-glycero-beta-D-manno-heptose 1-phosphate, yielding ADP-D-glycero-beta-D-manno-heptose. This is Bifunctional protein HldE from Bradyrhizobium sp. (strain ORS 278).